Here is a 660-residue protein sequence, read N- to C-terminus: tRNA 5-methylaminomethyl-2-thiouridine biosynthesis bifunctional protein MnmC (660 aa).

The tract at residues M1–A233 is tRNA (mnm(5)s(2)U34)-methyltransferase. The interval V260 to L660 is FAD-dependent cmnm(5)s(2)U34 oxidoreductase.

It in the N-terminal section; belongs to the methyltransferase superfamily. tRNA (mnm(5)s(2)U34)-methyltransferase family. The protein in the C-terminal section; belongs to the DAO family. Requires FAD as cofactor.

The protein resides in the cytoplasm. The enzyme catalyses 5-aminomethyl-2-thiouridine(34) in tRNA + S-adenosyl-L-methionine = 5-methylaminomethyl-2-thiouridine(34) in tRNA + S-adenosyl-L-homocysteine + H(+). In terms of biological role, catalyzes the last two steps in the biosynthesis of 5-methylaminomethyl-2-thiouridine (mnm(5)s(2)U) at the wobble position (U34) in tRNA. Catalyzes the FAD-dependent demodification of cmnm(5)s(2)U34 to nm(5)s(2)U34, followed by the transfer of a methyl group from S-adenosyl-L-methionine to nm(5)s(2)U34, to form mnm(5)s(2)U34. The chain is tRNA 5-methylaminomethyl-2-thiouridine biosynthesis bifunctional protein MnmC from Chromobacterium violaceum (strain ATCC 12472 / DSM 30191 / JCM 1249 / CCUG 213 / NBRC 12614 / NCIMB 9131 / NCTC 9757 / MK).